The following is a 2159-amino-acid chain: Calpain-type cysteine protease DEK1 (2159 aa).

Positions 1 to 33 (MEGEGHHGVVLACSICGFLFAVLSPFSFWVLWA) are cleaved as a signal peptide. Residues 34–70 (VNWRPWRLYSWIYARKWPTYVQGPQLSTLCSLLTLCA) are Extracellular-facing. A helical membrane pass occupies residues 71–91 (WLVVISPIAVLLVWGSVLIAL). Over 92-95 (MERN) the chain is Cytoplasmic. The helical transmembrane segment at 96–116 (IIGLAVIMAGVALLLSFYSIM) threads the bilayer. Residues 117 to 127 (LWWRTQWQSSE) are Extracellular-facing. A helical membrane pass occupies residues 128–148 (AVAYLLLLAVCLLCAYDFCAI). Residues 149-164 (YVTAGASASELNSPSG) are Cytoplasmic-facing. Residues 165-185 (FFFGVSVISLAINMLFICKIL) form a helical membrane-spanning segment. Residues 186–236 (FNVSGFDVDEYVRRSYKFAYSDCVEVAPVSCSPEPPDPSELYMTKSSRVKH) lie on the Extracellular side of the membrane. Residues 237-257 (LGLLYISSLLVLVGYSILYGL) form a helical membrane-spanning segment. Topologically, residues 258-264 (TSKEARW) are cytoplasmic. The chain crosses the membrane as a helical span at residues 265-285 (LGALTSVAVVILDWNLGLCSF). At 286-294 (RFELLKSRM) the chain is on the extracellular side. The helical transmembrane segment at 295 to 315 (IVLFVAGTSRAFLVSFGVHYW) threads the bilayer. Over 316–320 (YLGHC) the chain is Cytoplasmic. Residues 321-341 (ISYAFVASVLLSAAVSSWLSI) form a helical membrane-spanning segment. The Extracellular portion of the chain corresponds to 342–623 (SNPSVARIDA…LIFHHLAGSP (282 aa)). The interval 365–409 (RKGQNSSSNSSEGCGSSVKRSSGSVEAGQNGNAMDSMYRSNSQSD) is disordered. Over residues 369–381 (NSSSNSSEGCGSS) the composition is skewed to low complexity. Positions 382-409 (VKRSSGSVEAGQNGNAMDSMYRSNSQSD) are enriched in polar residues. A helical membrane pass occupies residues 624 to 644 (IRAFIVFTVMFIIETATVAIY). Topologically, residues 645-660 (RPETIKVINATHEQFE) are cytoplasmic. Residues 661–681 (FGFSILLLSPVVCSIMAFIWS) traverse the membrane as a helical segment. Topologically, residues 682 to 694 (LRAEEMLMTSKPQ) are extracellular. A helical transmembrane segment spans residues 695 to 715 (KYGFIAWLLSTCVGLFLSFLS). Residues 716 to 719 (KSSV) are Cytoplasmic-facing. Residues 720–740 (ILGLSLTVPLMVACLSFAVPI) traverse the membrane as a helical segment. Residues 741–770 (WIRNGYSFWIPGREFANRENVSQAPGEKER) are Extracellular-facing. A helical transmembrane segment spans residues 771–791 (ALFVITIAVFTASIIGLGAIV). Residues 792–822 (SAKPLDALGYKGWDADKNSSYSPYATSMYLG) lie on the Cytoplasmic side of the membrane. A helical membrane pass occupies residues 823–843 (WALSSTIAVITTGLIPIVAWF). Residues 844-853 (ATYRFSPSSA) are Extracellular-facing. Residues 854-874 (ICVGLFATVLVSFCGASYWGV) form a helical membrane-spanning segment. Residues 875-887 (VNSREDGVPLKAD) are Cytoplasmic-facing. A helical membrane pass occupies residues 888–908 (FLAALLPLLCIPAFFSLFTGL). The Extracellular segment spans residues 909-921 (YKWKDDDWKISRG). The chain crosses the membrane as a helical span at residues 922–942 (VYLFVGMGMLLLFGAVAAVIV). Residues 943–946 (TIRP) are Cytoplasmic-facing. The chain crosses the membrane as a helical span at residues 947 to 967 (WTVGVACLVAILFLVFVIGVI). At 968–981 (HYWTSNNFYLTRTQ) the chain is on the extracellular side. The chain crosses the membrane as a helical span at residues 982 to 1002 (MLLVCSIAFLLALAAFLMGLF). At 1003–1016 (HGKPFVGASIGYFS) the chain is on the cytoplasmic side. The chain crosses the membrane as a helical span at residues 1017 to 1037 (FIFLLTGRALTVLLSPPIVVY). Residues 1038–1060 (SPRVLPVYVYDAHADSAKNVSYA) lie on the Extracellular side of the membrane. A helical membrane pass occupies residues 1061–1081 (FLILYGIALATEVWGVIASLI). The Cytoplasmic portion of the chain corresponds to 1082–2159 (MNPPFVGAGV…SKASIRLEAV (1078 aa)). Serine 1371 and serine 1376 each carry phosphoserine. The Calpain catalytic 1 domain maps to 1417–1609 (TGRHCGELDL…MSPAEYGFFD (193 aa)). Serine 1665 is modified (phosphoserine). The 303-residue stretch at 1703–2005 (NFTDQEFPPE…FRSIYVCRVY (303 aa)) folds into the Calpain catalytic 2 domain. Residues cysteine 1769, histidine 1927, and asparagine 1947 contribute to the active site.

Belongs to the peptidase C2 family. In terms of processing, autocatalytic proteolytic cleavage leading to the production of mainly cytoplasmic localized subproducts of about 85 and 120 kDa. Expressed in most tissues at low levels ranging from 30 to 55 ppm. Present in all endosperm cells at transcript level, but confined to aleurones at protein level.

The protein localises to the endoplasmic reticulum membrane. The protein resides in the cytoplasm. It is found in the cell membrane. Its subcellular location is the endosome membrane. Its function is as follows. Essential protease involved in epiderm development. Required for aleurone cell development in the endosperm probably by maintaining and restricting the aleurone and embryonic epidermal L1 cell-layer fates as well as meristems organization. Involved in the maintenance of adaxial/abaxial axis information in developing leaves, probably by regulating cell proliferation and expansion. Does not need calcium ions to be active. In Zea mays (Maize), this protein is Calpain-type cysteine protease DEK1 (DEK1).